The following is a 101-amino-acid chain: Urease subunit beta (101 aa).

The protein belongs to the urease beta subunit family. As to quaternary structure, heterotrimer of UreA (gamma), UreB (beta) and UreC (alpha) subunits. Three heterotrimers associate to form the active enzyme.

The protein resides in the cytoplasm. It carries out the reaction urea + 2 H2O + H(+) = hydrogencarbonate + 2 NH4(+). It participates in nitrogen metabolism; urea degradation; CO(2) and NH(3) from urea (urease route): step 1/1. The sequence is that of Urease subunit beta from Psychromonas ingrahamii (strain DSM 17664 / CCUG 51855 / 37).